The chain runs to 443 residues: Ribulose bisphosphate carboxylase large chain (443 aa).

N89 and T139 together coordinate substrate. K141 (proton acceptor) is an active-site residue. K143 lines the substrate pocket. Residues K167, D169, and E170 each coordinate Mg(2+). N6-carboxylysine is present on K167. The active-site Proton acceptor is the H260. Positions 261, 293, and 345 each coordinate substrate.

The protein belongs to the RuBisCO large chain family. Type I subfamily. Heterohexadecamer of 8 large chains and 8 small chains; disulfide-linked. The disulfide link is formed within the large subunit homodimers. Requires Mg(2+) as cofactor. Post-translationally, the disulfide bond which can form in the large chain dimeric partners within the hexadecamer appears to be associated with oxidative stress and protein turnover.

Its subcellular location is the plastid. The protein localises to the chloroplast. It catalyses the reaction 2 (2R)-3-phosphoglycerate + 2 H(+) = D-ribulose 1,5-bisphosphate + CO2 + H2O. It carries out the reaction D-ribulose 1,5-bisphosphate + O2 = 2-phosphoglycolate + (2R)-3-phosphoglycerate + 2 H(+). Its function is as follows. RuBisCO catalyzes two reactions: the carboxylation of D-ribulose 1,5-bisphosphate, the primary event in carbon dioxide fixation, as well as the oxidative fragmentation of the pentose substrate in the photorespiration process. Both reactions occur simultaneously and in competition at the same active site. The polypeptide is Ribulose bisphosphate carboxylase large chain (Buddleja davidii (Butterfly bush)).